A 347-amino-acid chain; its full sequence is Heme A synthase (347 aa).

8 helical membrane passes run 14–34, 95–115, 125–145, 166–186, 198–218, 260–280, 289–309, and 311–331; these read VKVW…VGGI, YFHR…FLYF, LIVN…MGWL, LLLA…AVIL, LIFY…SLVA, FIHE…LLIL, LLLV…IYNV, and IALA…NTYL. Residue His-262 coordinates heme. Residue His-317 participates in heme binding.

It belongs to the COX15/CtaA family. Type 2 subfamily. As to quaternary structure, interacts with CtaB. Heme b serves as cofactor.

It localises to the cell membrane. The enzyme catalyses Fe(II)-heme o + 2 A + H2O = Fe(II)-heme a + 2 AH2. It participates in porphyrin-containing compound metabolism; heme A biosynthesis; heme A from heme O: step 1/1. In terms of biological role, catalyzes the conversion of heme O to heme A by two successive hydroxylations of the methyl group at C8. The first hydroxylation forms heme I, the second hydroxylation results in an unstable dihydroxymethyl group, which spontaneously dehydrates, resulting in the formyl group of heme A. This chain is Heme A synthase, found in Ehrlichia canis (strain Jake).